The primary structure comprises 174 residues: 2-hydroxy-palmitic acid dioxygenase MPO1 (174 aa).

The Cytoplasmic portion of the chain corresponds to 1-23 (MGEGLLDLRSQLGFYKFYHHNPK). The helical transmembrane segment at 24-44 (NVLIHSIFVPTILFSGSCMLH) threads the bilayer. Over 45-63 (RVKIYQSISLTAVLSVLFS) the chain is Lumenal. Residues 64–84 (IFYCLLYLPTGLLAGVLLLLL) traverse the membrane as a helical segment. At 85-98 (NLALIDHRVDLTFK) the chain is on the cytoplasmic side. The chain crosses the membrane as a helical span at residues 99 to 119 (QELGLFTIGWIFQFVGHGVFE). Residues 120–131 (KRRPALIDNLVQ) are Lumenal-facing. The chain crosses the membrane as a helical span at residues 132–152 (SLVLAPYFIMFEFLFKLGFMP). Residues 153 to 174 (RLKATLEHDLEIKQRNLRMQRQ) lie on the Cytoplasmic side of the membrane.

It belongs to the MPO1 family. Requires Fe(2+) as cofactor.

It localises to the endoplasmic reticulum membrane. It catalyses the reaction (R)-2-hydroxyhexadecanoate + O2 = pentadecanoate + CO2 + H2O. Dioxygenase that catalyzes the alpha-oxidation of 2-hydroxy fatty acids in an iron-dependent manner. Involved in metabolism of phytosphingosine and is required for proper endoplasmic reticulum stress response. This is 2-hydroxy-palmitic acid dioxygenase MPO1 from Saccharomyces cerevisiae (strain ATCC 204508 / S288c) (Baker's yeast).